The sequence spans 211 residues: ATP phosphoribosyltransferase (211 aa).

The protein belongs to the ATP phosphoribosyltransferase family. Short subfamily. As to quaternary structure, heteromultimer composed of HisG and HisZ subunits.

Its subcellular location is the cytoplasm. The enzyme catalyses 1-(5-phospho-beta-D-ribosyl)-ATP + diphosphate = 5-phospho-alpha-D-ribose 1-diphosphate + ATP. It functions in the pathway amino-acid biosynthesis; L-histidine biosynthesis; L-histidine from 5-phospho-alpha-D-ribose 1-diphosphate: step 1/9. Its function is as follows. Catalyzes the condensation of ATP and 5-phosphoribose 1-diphosphate to form N'-(5'-phosphoribosyl)-ATP (PR-ATP). Has a crucial role in the pathway because the rate of histidine biosynthesis seems to be controlled primarily by regulation of HisG enzymatic activity. This Hahella chejuensis (strain KCTC 2396) protein is ATP phosphoribosyltransferase.